A 435-amino-acid polypeptide reads, in one-letter code: Adenylosuccinate synthetase (435 aa).

Residues G20–K26 and G48–T50 contribute to the GTP site. D21 acts as the Proton acceptor in catalysis. Positions 21 and 48 each coordinate Mg(2+). IMP-binding positions include D21–K24, N46–H49, T134, R148, Q229, T244, and R308. H49 acts as the Proton donor in catalysis. Residue T304–R310 coordinates substrate. Residues R310, K336–D338, and S422–G424 contribute to the GTP site.

Belongs to the adenylosuccinate synthetase family. Homodimer. Requires Mg(2+) as cofactor.

It localises to the cytoplasm. The catalysed reaction is IMP + L-aspartate + GTP = N(6)-(1,2-dicarboxyethyl)-AMP + GDP + phosphate + 2 H(+). It functions in the pathway purine metabolism; AMP biosynthesis via de novo pathway; AMP from IMP: step 1/2. Its function is as follows. Plays an important role in the de novo pathway of purine nucleotide biosynthesis. Catalyzes the first committed step in the biosynthesis of AMP from IMP. This is Adenylosuccinate synthetase from Thermoplasma acidophilum (strain ATCC 25905 / DSM 1728 / JCM 9062 / NBRC 15155 / AMRC-C165).